We begin with the raw amino-acid sequence, 244 residues long: MNVLANTLKGLYDVSGVEVGQHFYWQIGGFQVHGQVLITSWVVIAILLGSAAIAVRDPQTIPTGGQNFFEYVLEFIRDVSKTQIGEEYGPWVPFIGTLFLFIFVSNWSGALLPWKIIQLPHGELAAPTNDINTTVALALLTSVAYFYAGITKKGLSYFGKYIQPTPILLPINILEDFTKPLSLSFRLFGNILADELVVVVLVSLVPLVVPIPVMFLGLFTSGIQALIFATLAAAYIGESMEGHH.

Helical transmembrane passes span 35–55, 92–112, 131–151, 196–216, and 217–237; these read QVLITSWVVIAILLGSAAIAV, VPFIGTLFLFIFVSNWSGALL, INTTVALALLTSVAYFYAGIT, LVVVVLVSLVPLVVPIPVMFL, and GLFTSGIQALIFATLAAAYIG.

Belongs to the ATPase A chain family. F-type ATPases have 2 components, CF(1) - the catalytic core - and CF(0) - the membrane proton channel. CF(1) has five subunits: alpha(3), beta(3), gamma(1), delta(1), epsilon(1). CF(0) has four main subunits: a, b, b' and c.

It localises to the plastid. The protein localises to the chloroplast thylakoid membrane. Its function is as follows. Key component of the proton channel; it plays a direct role in the translocation of protons across the membrane. The chain is ATP synthase subunit a, chloroplastic from Coffea arabica (Arabian coffee).